A 172-amino-acid chain; its full sequence is Protein-export protein SecB (172 aa).

Belongs to the SecB family. In terms of assembly, homotetramer, a dimer of dimers. One homotetramer interacts with 1 SecA dimer.

The protein localises to the cytoplasm. Its function is as follows. One of the proteins required for the normal export of preproteins out of the cell cytoplasm. It is a molecular chaperone that binds to a subset of precursor proteins, maintaining them in a translocation-competent state. It also specifically binds to its receptor SecA. The polypeptide is Protein-export protein SecB (Haemophilus ducreyi (strain 35000HP / ATCC 700724)).